The sequence spans 396 residues: GPN-loop GTPase 1 (396 aa).

Low complexity predominate over residues 1–13 (MSETTATSTTTTK). The tract at residues 1-30 (MSETTATSTTTTKTTDKDNVNNNNNNENKE) is disordered. 44–49 (GSGKTT) provides a ligand contact to GTP. The short motif at 101–103 (GPN) is the Gly-Pro-Asn (GPN)-loop; involved in dimer interface element. 204-207 (NKID) provides a ligand contact to GTP. Positions 284 to 387 (YKADLEKIKK…ERLEDQRAYE (104 aa)) form a coiled coil. A compositionally biased stretch (basic and acidic residues) spans 325-342 (DFKKEKKRENQEKTKNIY). Residues 325-396 (DFKKEKKREN…ESLMSSIKKI (72 aa)) form a disordered region. Positions 343–380 (DDEEDDYRDDRDMEDSGEYESYEDEQEEGDYENEEERL) are enriched in acidic residues.

The protein belongs to the GPN-loop GTPase family. As to quaternary structure, heterodimer with gpn3. Binds to RNA polymerase II (RNAPII).

The protein resides in the cytoplasm. Its subcellular location is the nucleus. Its function is as follows. Small GTPase required for proper nuclear import of RNA polymerase II (RNAPII). May act at an RNAP assembly step prior to nuclear import. The sequence is that of GPN-loop GTPase 1 (gpn1) from Dictyostelium discoideum (Social amoeba).